The sequence spans 378 residues: Spermatogenic leucine zipper protein 1 (378 aa).

The interval 1–31 (MSDTDNSAEMPARCPSPNPAPGAKQEPPNSG) is disordered. Residue Ser-106 is modified to Phosphoserine. The interaction with PPP1CC isoform gamma-2 stretch occupies residues 116 to 122 (KNKIRFK). Residues 116-127 (KNKIRFKDDLFI) are helix-loop-helix motif. The basic motif stretch occupies residues 128 to 193 (HFDPEREQNT…HLRGEYRKLR (66 aa)). Positions 182-233 (SLHLRGEYRKLRNNMEQLLQEADHWSKQHNELSELMRSYQECQNETQETTDK) form a coiled coil. Phosphoserine is present on Ser-207. Positions 252–273 (LEEQVKKLSHDTHALHLIAALL) are leucine-zipper.

Interacts with PPP1CC isoform gamma-2. This interaction can prevent SPZ1 binding to the E-box and inhibits PPP1CC activity. Phosphorylated by MAPK1/ERK2 and MAPK3/ERK1. Expressed specifically in the testis and epidydimis. In the testis expressed in both germ cells and somatic cells (Sertoli and Leydig cells). Expressed in several tumor cell lines.

The protein localises to the cytoplasm. The protein resides in the nucleus. Functionally, transcription factor that binds to the DNA sequence 5'-CANNTG-3'(E box) and the G-box motif. Directly binds to a guanine-rich region of the PCNA promoter and up-regulates its expression which in turn induces cell transformation and tumor formation. May play an important role in the regulation of cell proliferation and differentiation during spermatogenesis. The polypeptide is Spermatogenic leucine zipper protein 1 (Spz1) (Mus musculus (Mouse)).